Here is a 154-residue protein sequence, read N- to C-terminus: Protein X (154 aa).

The interval 68-117 is mitochondrial targeting sequence; that stretch reads PCALRFTSARRMETTVNAPGNLPKVLHKRTLGLSVMSTTDLEAYFKDCVF.

Belongs to the orthohepadnavirus protein X family. May form homodimer. May interact with host CEBPA, CFLAR, CREB1, DDB1, E4F1, HBXIP, HSPD1/HSP60, NFKBIA, POLR2E and SMAD4. Interacts with host SMC5-SMC6 complex and induces its degradation. Interacts with host TRPC4AP; leading to prevent ubiquitination of TRPC4AP. Interacts with host PLSCR1; this interaction promotes ubiquitination and degradation of HBx and impairs HBx-mediated cell proliferation. A fraction may be phosphorylated in insect cells and HepG2 cells, a human hepatoblastoma cell line. Phosphorylated in vitro by host protein kinase C or mitogen-activated protein kinase. N-acetylated in insect cells.

It is found in the host cytoplasm. Its subcellular location is the host nucleus. It localises to the host mitochondrion. In terms of biological role, multifunctional protein that plays a role in silencing host antiviral defenses and promoting viral transcription. Does not seem to be essential for HBV infection. May be directly involved in development of cirrhosis and liver cancer (hepatocellular carcinoma). Most of cytosolic activities involve modulation of cytosolic calcium. The effect on apoptosis is controversial depending on the cell types in which the studies have been conducted. May induce apoptosis by localizing in mitochondria and causing loss of mitochondrial membrane potential. May also modulate apoptosis by binding host CFLAR, a key regulator of the death-inducing signaling complex (DISC). Promotes viral transcription by using the host E3 ubiquitin ligase DDB1 to target the SMC5-SMC6 complex to proteasomal degradation. This host complex would otherwise bind to viral episomal DNA, and prevents its transcription. Moderately stimulates transcription of many different viral and cellular transcription elements. Promoters and enhancers stimulated by HBx contain DNA binding sites for NF-kappa-B, AP-1, AP-2, c-EBP, ATF/CREB, or the calcium-activated factor NF-AT. The protein is Protein X of Hepatitis B virus genotype B2 (isolate Vietnam/16091/1992) (HBV-B).